Here is a 508-residue protein sequence, read N- to C-terminus: MDLMDMDAINDLHFSGHSSLTNTPTSDEDYGCTWNHWSPIVNWDTFTGAPDDFHHLMDTIIEDRTTVLEQLSPSITTTTTTTTTTDEEEEEMETTTTTTTTAIKTHEVGDDSKGLKLVHLLMAGAEALTGSTKNRDLARVILIRLKELVSQHANGSNMERLAAHFTEALHGLLEGAGGAHNNHHHHNNNKHYLTTNGPHDNQNDTLAAFQLLQDMSPYVKFGHFTANQAIIEAVAHERRVHVIDYDIMEGVQWASLIQSLASNNNGPHLRITALSRTGTGRRSIATVQETGRRLTSFAASLGQPFSFHHCRLDSDETFRPSALKLVRGEALVFNCMLNLPHLSYRAPESVASFLNGAKTLNPKLVTLVEEEVGSVIGGFVERFMDSLHHYSAVFDSLEAGFPMQNRARTLVERVFFGPRIAGSLGRIYRTGGEEERRSWGEWLGEVGFRGVPVSFANHCQAKLLLGLFNDGYRVEEVGVGSNKLVLDWKSRRLLSASLWTCSSSDSDL.

Residues Ile75–Thr98 are disordered. A GRAS domain is found at Val108–Thr500. The interval Leu115–Lys190 is leucine repeat I (LRI). A VHIID region spans residues Phe209–Ala273. Residues Val240–Asp244 carry the VHIID motif. The tract at residues Glu289–Ser321 is leucine repeat II (LRII). The interval Leu331–Gly422 is PFYRE. Residues Gly425–Thr500 are SAW.

Belongs to the GRAS family. As to quaternary structure, interacts with RAM1. Interacts with IPN2 and RAD1. As to expression, expressed in roots, shoots and leaves.

The protein localises to the nucleus membrane. Its subcellular location is the endoplasmic reticulum. Transcriptional regulator essential for Nod-factor-induced gene expression. Acts downstream of calcium spiking and DMI3, a calcium/calmodulin-dependent protein kinase (CCaMK). Transcription factor involved in the control of strigolactone biosynthesis in roots through the activation of the beta-carotene isomerase D27, which participates in a pathway leading to biosynthesis of strigolactones. The chain is Protein NODULATION SIGNALING PATHWAY 2 from Medicago truncatula (Barrel medic).